We begin with the raw amino-acid sequence, 500 residues long: Probable malate:quinone oxidoreductase (500 aa).

It belongs to the MQO family. The cofactor is FAD.

The catalysed reaction is (S)-malate + a quinone = a quinol + oxaloacetate. It functions in the pathway carbohydrate metabolism; tricarboxylic acid cycle; oxaloacetate from (S)-malate (quinone route): step 1/1. The sequence is that of Probable malate:quinone oxidoreductase from Halalkalibacterium halodurans (strain ATCC BAA-125 / DSM 18197 / FERM 7344 / JCM 9153 / C-125) (Bacillus halodurans).